Consider the following 299-residue polypeptide: Oxygen-dependent coproporphyrinogen-III oxidase (299 aa).

Position 92 (Ser92) interacts with substrate. Mn(2+) is bound by residues His96 and His106. His106 serves as the catalytic Proton donor. 108-110 is a substrate binding site; sequence NVR. The Mn(2+) site is built by His145 and His175. The important for dimerization stretch occupies residues 240-275; it reads YVEFNLVWDRGTLFGLQTGGRTESILMSMPPLVRWE. A substrate-binding site is contributed by 258 to 260; it reads GGR.

This sequence belongs to the aerobic coproporphyrinogen-III oxidase family. Homodimer. Mn(2+) serves as cofactor.

It is found in the cytoplasm. It carries out the reaction coproporphyrinogen III + O2 + 2 H(+) = protoporphyrinogen IX + 2 CO2 + 2 H2O. The protein operates within porphyrin-containing compound metabolism; protoporphyrin-IX biosynthesis; protoporphyrinogen-IX from coproporphyrinogen-III (O2 route): step 1/1. Its function is as follows. Involved in the heme biosynthesis. Catalyzes the aerobic oxidative decarboxylation of propionate groups of rings A and B of coproporphyrinogen-III to yield the vinyl groups in protoporphyrinogen-IX. The chain is Oxygen-dependent coproporphyrinogen-III oxidase from Escherichia coli O127:H6 (strain E2348/69 / EPEC).